The following is a 313-amino-acid chain: PDCD10 and GCKIII kinases-associated protein 1 (313 aa).

Positions Arg40–Cys89 are disordered. Ser60 and Ser64 each carry phosphoserine. Residues Ser60–Leu73 show a composition bias toward polar residues. Residue Thr104 is modified to Phosphothreonine. Ser107, Ser237, and Ser240 each carry phosphoserine. Positions Tyr253–Val286 are disordered. The segment covering Gly269–Val285 has biased composition (basic and acidic residues).

In terms of assembly, interacts with KEAP1; this interaction prevents the ubiquitination of KEAP1 by TRIM25, thus protecting KEAP1 from degradation. Found in association with PDCD10 and members of the STE20 kinases, such as STK24, STK25 and STK26.

Its subcellular location is the cell membrane. Its function is as follows. Acts as a tumor suppressor. Acts as a tumor suppressor for colorectal cancer cell proliferation by targeting KEAP1/USP17/ELK1/CDK6 axis. The sequence is that of PDCD10 and GCKIII kinases-associated protein 1 from Mus musculus (Mouse).